The following is a 103-amino-acid chain: Large ribosomal subunit protein uL23 (103 aa).

It belongs to the universal ribosomal protein uL23 family. In terms of assembly, part of the 50S ribosomal subunit. Contacts protein L29, and trigger factor when it is bound to the ribosome.

Its function is as follows. One of the early assembly proteins it binds 23S rRNA. One of the proteins that surrounds the polypeptide exit tunnel on the outside of the ribosome. Forms the main docking site for trigger factor binding to the ribosome. The chain is Large ribosomal subunit protein uL23 from Chlorobium phaeobacteroides (strain DSM 266 / SMG 266 / 2430).